The chain runs to 329 residues: Porphobilinogen deaminase (329 aa).

Cys-250 is subject to S-(dipyrrolylmethanemethyl)cysteine.

It belongs to the HMBS family. As to quaternary structure, monomer. It depends on dipyrromethane as a cofactor.

It catalyses the reaction 4 porphobilinogen + H2O = hydroxymethylbilane + 4 NH4(+). It functions in the pathway porphyrin-containing compound metabolism; protoporphyrin-IX biosynthesis; coproporphyrinogen-III from 5-aminolevulinate: step 2/4. Its function is as follows. Tetrapolymerization of the monopyrrole PBG into the hydroxymethylbilane pre-uroporphyrinogen in several discrete steps. This chain is Porphobilinogen deaminase, found in Burkholderia pseudomallei (strain 668).